A 498-amino-acid polypeptide reads, in one-letter code: Protein YhjJ (498 aa).

Positions 1–24 are cleaved as a signal peptide; the sequence is MQGTKIRLLAGGLLMMATAGYVQA.

This sequence belongs to the peptidase M16 family.

Its subcellular location is the periplasm. This chain is Protein YhjJ (yhjJ), found in Escherichia coli (strain K12).